Consider the following 423-residue polypeptide: Anthranilate 1,2-dioxygenase large subunit (423 aa).

Positions 53 to 168 constitute a Rieske domain; the sequence is WNFVALEAEI…VDSYRGLVFA (116 aa). [2Fe-2S] cluster contacts are provided by cysteine 95, histidine 97, cysteine 115, and histidine 118. Fe cation-binding residues include histidine 223, histidine 228, and aspartate 370.

Belongs to the bacterial ring-hydroxylating dioxygenase alpha subunit family. Part of a multicomponent enzyme system composed of a reductase (AndAa), a ferredoxin (AndAb) and a two-subunit oxygenase component (AndAc and AndAd). Requires Fe cation as cofactor. [2Fe-2S] cluster serves as cofactor.

It catalyses the reaction anthranilate + NADH + O2 + 3 H(+) = catechol + NH4(+) + CO2 + NAD(+). It carries out the reaction anthranilate + NADPH + O2 + 3 H(+) = catechol + NH4(+) + CO2 + NADP(+). It participates in aromatic compound metabolism; anthranilate degradation via hydroxylation; catechol from anthranilate: step 1/1. Functionally, oxygenase component of anthranilate dioxygenase multicomponent enzyme system which catalyzes the incorporation of both atoms of molecular oxygen into anthranilate to form catechol. Can also act on benzoate and salicylate but not on 2-chlorobenzoate or o-toluate. In Burkholderia cepacia (Pseudomonas cepacia), this protein is Anthranilate 1,2-dioxygenase large subunit.